The primary structure comprises 233 residues: Small ribosomal subunit protein uS3 (233 aa).

A KH type-2 domain is found at 39–107; that stretch reads VRTFLTKELK…PAQINISEVR (69 aa).

This sequence belongs to the universal ribosomal protein uS3 family. Part of the 30S ribosomal subunit. Forms a tight complex with proteins S10 and S14.

In terms of biological role, binds the lower part of the 30S subunit head. Binds mRNA in the 70S ribosome, positioning it for translation. The chain is Small ribosomal subunit protein uS3 from Pseudoalteromonas translucida (strain TAC 125).